The sequence spans 659 residues: UvrABC system protein B (659 aa).

The 388-residue stretch at 27–414 (EGLEQNKKSQ…AHGEIVKQII (388 aa)) folds into the Helicase ATP-binding domain. Residue 40 to 47 (GVTGSGKT) participates in ATP binding. Residues 93 to 116 (YFDYYRPEAYMPNTDTYIDKTTKS) carry the Beta-hairpin motif. The Helicase C-terminal domain maps to 432-594 (QVEDMFDEIQ…IIPKTIIKPI (163 aa)). Residues 624–659 (EALVKDLRNQMLDASKQLNFERAAELRDIILELEAN) enclose the UVR domain.

It belongs to the UvrB family. Forms a heterotetramer with UvrA during the search for lesions. Interacts with UvrC in an incision complex.

Its subcellular location is the cytoplasm. Its function is as follows. The UvrABC repair system catalyzes the recognition and processing of DNA lesions. A damage recognition complex composed of 2 UvrA and 2 UvrB subunits scans DNA for abnormalities. Upon binding of the UvrA(2)B(2) complex to a putative damaged site, the DNA wraps around one UvrB monomer. DNA wrap is dependent on ATP binding by UvrB and probably causes local melting of the DNA helix, facilitating insertion of UvrB beta-hairpin between the DNA strands. Then UvrB probes one DNA strand for the presence of a lesion. If a lesion is found the UvrA subunits dissociate and the UvrB-DNA preincision complex is formed. This complex is subsequently bound by UvrC and the second UvrB is released. If no lesion is found, the DNA wraps around the other UvrB subunit that will check the other stand for damage. This Mycoplasma mobile (strain ATCC 43663 / 163K / NCTC 11711) (Mesomycoplasma mobile) protein is UvrABC system protein B.